The chain runs to 351 residues: MSLQWWRDTCREADPQMRRRAAERQDRLTKPRGSLGRLEQVAIDLAALQGRERPSLERLWVTVFAGDHGVVAEGVSAYPQAVTGEMLRNFVRGGAAISVLARELGAGLEVVDLGTAVPLEALPGVRHLRLAAGTANFVEAPAMGAEQCLLALEAGRESVRRAEQAGSQLFIGGEMGIGNTTAAAAMACALLDAPVSALVGPGTGLDASGVAHKTAVIERALALHGAHRADPFETLRRLGGLEIAALAGAYLACAQKGMVALVDGYICSVAALCAVRLNPACRDWLLFAHSGAEPGHRHVLEALAAQPLLDLGLRLGEGSGAALAVPLLRQACALHAGMATFAEAAVSDRPA.

Glu317 functions as the Proton acceptor in the catalytic mechanism.

The protein belongs to the CobT family.

The enzyme catalyses 5,6-dimethylbenzimidazole + nicotinate beta-D-ribonucleotide = alpha-ribazole 5'-phosphate + nicotinate + H(+). It participates in nucleoside biosynthesis; alpha-ribazole biosynthesis; alpha-ribazole from 5,6-dimethylbenzimidazole: step 1/2. Catalyzes the synthesis of alpha-ribazole-5'-phosphate from nicotinate mononucleotide (NAMN) and 5,6-dimethylbenzimidazole (DMB). The protein is Nicotinate-nucleotide--dimethylbenzimidazole phosphoribosyltransferase of Pseudomonas aeruginosa (strain UCBPP-PA14).